Reading from the N-terminus, the 372-residue chain is Glutamate 5-kinase (372 aa).

Lysine 14 provides a ligand contact to ATP. Residues serine 54, aspartate 141, and asparagine 153 each coordinate substrate. ATP-binding positions include 173–174 and 215–221; these read TD and TGGMATK. Residues 280–358 form the PUA domain; sequence RGKLILDQGA…DDIESLLGYD (79 aa).

Belongs to the glutamate 5-kinase family.

It localises to the cytoplasm. It carries out the reaction L-glutamate + ATP = L-glutamyl 5-phosphate + ADP. Its pathway is amino-acid biosynthesis; L-proline biosynthesis; L-glutamate 5-semialdehyde from L-glutamate: step 1/2. Functionally, catalyzes the transfer of a phosphate group to glutamate to form L-glutamate 5-phosphate. This chain is Glutamate 5-kinase, found in Shewanella sediminis (strain HAW-EB3).